A 101-amino-acid chain; its full sequence is NAD(P)H-quinone oxidoreductase subunit 4L, chloroplastic (101 aa).

The next 3 helical transmembrane spans lie at 2 to 22, 32 to 52, and 61 to 81; these read MLEH…YGLI, MCLE…SDLF, and IFSI…LAIV.

It belongs to the complex I subunit 4L family. As to quaternary structure, NDH is composed of at least 16 different subunits, 5 of which are encoded in the nucleus.

It is found in the plastid. The protein localises to the chloroplast thylakoid membrane. The enzyme catalyses a plastoquinone + NADH + (n+1) H(+)(in) = a plastoquinol + NAD(+) + n H(+)(out). The catalysed reaction is a plastoquinone + NADPH + (n+1) H(+)(in) = a plastoquinol + NADP(+) + n H(+)(out). Its function is as follows. NDH shuttles electrons from NAD(P)H:plastoquinone, via FMN and iron-sulfur (Fe-S) centers, to quinones in the photosynthetic chain and possibly in a chloroplast respiratory chain. The immediate electron acceptor for the enzyme in this species is believed to be plastoquinone. Couples the redox reaction to proton translocation, and thus conserves the redox energy in a proton gradient. This Nandina domestica (Heavenly bamboo) protein is NAD(P)H-quinone oxidoreductase subunit 4L, chloroplastic.